The chain runs to 421 residues: Glutamyl-tRNA reductase (421 aa).

Substrate-binding positions include 49–52, S109, 114–116, and Q120; these read TCNR and EAQ. The active-site Nucleophile is the C50. An NADP(+)-binding site is contributed by 189–194; the sequence is GAGEMC.

Belongs to the glutamyl-tRNA reductase family. Homodimer.

The catalysed reaction is (S)-4-amino-5-oxopentanoate + tRNA(Glu) + NADP(+) = L-glutamyl-tRNA(Glu) + NADPH + H(+). Its pathway is porphyrin-containing compound metabolism; protoporphyrin-IX biosynthesis; 5-aminolevulinate from L-glutamyl-tRNA(Glu): step 1/2. Catalyzes the NADPH-dependent reduction of glutamyl-tRNA(Glu) to glutamate 1-semialdehyde (GSA). The chain is Glutamyl-tRNA reductase from Magnetococcus marinus (strain ATCC BAA-1437 / JCM 17883 / MC-1).